The following is a 192-amino-acid chain: MADGEVENKLRDVIERKILDARRVFFSEPVTDKSAADAIKKLWYLELTNPGQPIVFVINSPGGSVDAGFAVWDQIKMMTSPVTTVVTGLAASMGSVLSLCAAPGRRFATPHSRIMIHQPSIGGPITGQATDLDIHAREILKTKKRIVDVYLEATGQSREVIEKAIDRDTWMTADEAKDFGLLDGILFSFNDL.

Ser92 functions as the Nucleophile in the catalytic mechanism. The active site involves His117.

It belongs to the peptidase S14 family. Fourteen ClpP subunits assemble into 2 heptameric rings which stack back to back to give a disk-like structure with a central cavity, resembling the structure of eukaryotic proteasomes.

It localises to the cytoplasm. It carries out the reaction Hydrolysis of proteins to small peptides in the presence of ATP and magnesium. alpha-casein is the usual test substrate. In the absence of ATP, only oligopeptides shorter than five residues are hydrolyzed (such as succinyl-Leu-Tyr-|-NHMec, and Leu-Tyr-Leu-|-Tyr-Trp, in which cleavage of the -Tyr-|-Leu- and -Tyr-|-Trp bonds also occurs).. Its function is as follows. Cleaves peptides in various proteins in a process that requires ATP hydrolysis. Has a chymotrypsin-like activity. Plays a major role in the degradation of misfolded proteins. In Chlamydia abortus (strain DSM 27085 / S26/3) (Chlamydophila abortus), this protein is ATP-dependent Clp protease proteolytic subunit 1.